We begin with the raw amino-acid sequence, 306 residues long: Aspartate carbamoyltransferase catalytic subunit (306 aa).

Carbamoyl phosphate contacts are provided by Arg53 and Thr54. Lys82 is an L-aspartate binding site. Carbamoyl phosphate is bound by residues Arg103, His131, and Gln134. 2 residues coordinate L-aspartate: Arg164 and Arg226. Residues Leu263 and Pro264 each coordinate carbamoyl phosphate.

This sequence belongs to the aspartate/ornithine carbamoyltransferase superfamily. ATCase family. In terms of assembly, heterododecamer (2C3:3R2) of six catalytic PyrB chains organized as two trimers (C3), and six regulatory PyrI chains organized as three dimers (R2).

The enzyme catalyses carbamoyl phosphate + L-aspartate = N-carbamoyl-L-aspartate + phosphate + H(+). The protein operates within pyrimidine metabolism; UMP biosynthesis via de novo pathway; (S)-dihydroorotate from bicarbonate: step 2/3. In terms of biological role, catalyzes the condensation of carbamoyl phosphate and aspartate to form carbamoyl aspartate and inorganic phosphate, the committed step in the de novo pyrimidine nucleotide biosynthesis pathway. The protein is Aspartate carbamoyltransferase catalytic subunit of Methanocaldococcus jannaschii (strain ATCC 43067 / DSM 2661 / JAL-1 / JCM 10045 / NBRC 100440) (Methanococcus jannaschii).